A 656-amino-acid polypeptide reads, in one-letter code: Kinesin-related protein SMY1 (656 aa).

The 338-residue stretch at 27–364 (HIEVILRAIP…LEFGDSIRQI (338 aa)) folds into the Kinesin motor domain. 114–121 (GPSFSGKS) provides a ligand contact to ATP. T583 carries the post-translational modification Phosphothreonine.

The protein belongs to the TRAFAC class myosin-kinesin ATPase superfamily. Kinesin family.

The protein localises to the cytoplasm. The protein resides in the cytoskeleton. Its function is as follows. Possible microtubule-based motor that can interact or substitute with myosin 2 (MYO2). The protein is Kinesin-related protein SMY1 (SMY1) of Saccharomyces cerevisiae (strain ATCC 204508 / S288c) (Baker's yeast).